A 359-amino-acid chain; its full sequence is Phosphoserine aminotransferase (359 aa).

L-glutamate is bound at residue R42. Pyridoxal 5'-phosphate-binding positions include 76-77, W102, T152, D171, and Q194; that span reads AS. K195 is modified (N6-(pyridoxal phosphate)lysine). Residue 236–237 coordinates pyridoxal 5'-phosphate; the sequence is NT.

This sequence belongs to the class-V pyridoxal-phosphate-dependent aminotransferase family. SerC subfamily. Homodimer. It depends on pyridoxal 5'-phosphate as a cofactor.

Its subcellular location is the cytoplasm. The catalysed reaction is O-phospho-L-serine + 2-oxoglutarate = 3-phosphooxypyruvate + L-glutamate. It catalyses the reaction 4-(phosphooxy)-L-threonine + 2-oxoglutarate = (R)-3-hydroxy-2-oxo-4-phosphooxybutanoate + L-glutamate. The protein operates within amino-acid biosynthesis; L-serine biosynthesis; L-serine from 3-phospho-D-glycerate: step 2/3. Its pathway is cofactor biosynthesis; pyridoxine 5'-phosphate biosynthesis; pyridoxine 5'-phosphate from D-erythrose 4-phosphate: step 3/5. Functionally, catalyzes the reversible conversion of 3-phosphohydroxypyruvate to phosphoserine and of 3-hydroxy-2-oxo-4-phosphonooxybutanoate to phosphohydroxythreonine. The sequence is that of Phosphoserine aminotransferase from Ruthia magnifica subsp. Calyptogena magnifica.